We begin with the raw amino-acid sequence, 429 residues long: Histidine--tRNA ligase (429 aa).

Belongs to the class-II aminoacyl-tRNA synthetase family. Homodimer.

The protein localises to the cytoplasm. The enzyme catalyses tRNA(His) + L-histidine + ATP = L-histidyl-tRNA(His) + AMP + diphosphate + H(+). In Stutzerimonas stutzeri (strain A1501) (Pseudomonas stutzeri), this protein is Histidine--tRNA ligase.